The chain runs to 515 residues: SWI/SNF-related matrix-associated actin-dependent regulator of chromatin subfamily D member 1 (515 aa).

The tract at residues 1 to 128 is disordered; the sequence is MAARAGFQSV…RNHNAKKKKM (128 aa). Over residues 14–23 the composition is skewed to gly residues; that stretch reads GGAGASGGAG. The interaction with ESR1, NR1H4, NR3C1, PGR and SMARCA4 stretch occupies residues 43–167; it reads APGQGLYRSP…DQTIMRKRLD (125 aa). An asymmetric dimethylarginine mark is found at Arg-68 and Arg-88. Lys-101 participates in a covalent cross-link: Glycyl lysine isopeptide (Lys-Gly) (interchain with G-Cter in SUMO2). Low complexity predominate over residues 103 to 117; sequence PAPQQIKQVQQQAVQ. The segment at 168 to 474 is interaction with SMARCC1 and SMARCC2; it reads IQEALKRPIK…VMTDVVGNSE (307 aa). Residues 180–515 form a necessary for GR/NR3C1-mediated remodeling and transcription from chromatin; required for GR/NR3C1 interaction with the BRG1/SMARCA4 complex in vivo region; the sequence is RKLRIFISNT…LEQALGIRNT (336 aa). Thr-203 is modified (phosphothreonine). Position 223 is an N6-acetyllysine (Lys-223). The 78-residue stretch at 290–367 folds into the SWIB/MDM2 domain; sequence YQPPQFKLDP…PQRLHALLMP (78 aa). Residues 412–440 adopt a coiled-coil conformation; it reads ASQQEIATLDNKIHETIETINQLKTQREF.

Belongs to the SMARCD family. In terms of assembly, component of the multiprotein chromatin-remodeling complexes SWI/SNF: SWI/SNF-A (BAF), SWI/SNF-B (PBAF) and related complexes. The canonical complex contains a catalytic subunit (either SMARCA4/BRG1/BAF190A or SMARCA2/BRM/BAF190B), and at least SMARCE1, ACTL6A/BAF53, SMARCC1/BAF155, SMARCC2/BAF170, and SMARCB1/SNF5/BAF47. Other subunits specific to each of the complexes may also be present permitting several possible combinations developmentally and tissue specific. Component of the BAF complex, which includes at least actin (ACTB), ARID1A/BAF250A, ARID1B/BAF250B, SMARCA2/BRM, SMARCA4/BRG1/BAF190A, ACTL6A/BAF53, ACTL6B/BAF53B, SMARCE1/BAF57, SMARCC1/BAF155, SMARCC2/BAF170, SMARCB1/SNF5/INI1, and one or more SMARCD1/BAF60A, SMARCD2/BAF60B, or SMARCD3/BAF60C. In muscle cells, the BAF complex also contains DPF3. Component of neural progenitors-specific chromatin remodeling complex (npBAF complex) composed of at least, ARID1A/BAF250A or ARID1B/BAF250B, SMARCD1/BAF60A, SMARCD3/BAF60C, SMARCA2/BRM/BAF190B, SMARCA4/BRG1/BAF190A, SMARCB1/BAF47, SMARCC1/BAF155, SMARCE1/BAF57, SMARCC2/BAF170, PHF10/BAF45A, ACTL6A/BAF53A and actin. Component of neuron-specific chromatin remodeling complex (nBAF complex) composed of at least, ARID1A/BAF250A or ARID1B/BAF250B, SMARCD1/BAF60A, SMARCD3/BAF60C, SMARCA2/BRM/BAF190B, SMARCA4/BRG1/BAF190A, SMARCB1/BAF47, SMARCC1/BAF155, SMARCE1/BAF57, SMARCC2/BAF170, DPF1/BAF45B, DPF3/BAF45C, ACTL6B/BAF53B and actin. Component of the SWI/SNF-B (PBAF) chromatin remodeling complex, at least composed of SMARCA4/BRG1, SMARCB1/BAF47/SNF5, ACTL6A/BAF53A or ACTL6B/BAF53B, SMARCE1/BAF57, SMARCD1/BAF60A, SMARCD2/BAF60B, perhaps SMARCD3/BAF60C, SMARCC1/BAF155, SMARCC2/BAF170, PBRM1/BAF180, ARID2/BAF200 and actin (ACTB). Component of SWI/SNF (GBAF) subcomplex, which includes at least BICRA or BICRAL (mutually exclusive), BRD9, SS18, SMARCA2/BRM, SMARCA4/BRG1/BAF190A, ACTL6A/BAF53, SMARCC1/BAF155, and SMARCD1/BAF60A. Specifically interacts with the VDR heterodimer complex. Interacts with ESR1, NR3C1, NR1H4, PGR, SMARCA4, SMARCC1 and SMARCC2. Interacts with DPF2. Interacts with FOS, FOSB, FOSL1 and FOSL2.

The protein resides in the nucleus. Its function is as follows. Involved in transcriptional activation and repression of select genes by chromatin remodeling (alteration of DNA-nucleosome topology). Component of SWI/SNF chromatin remodeling complexes that carry out key enzymatic activities, changing chromatin structure by altering DNA-histone contacts within a nucleosome in an ATP-dependent manner. Belongs to the neural progenitors-specific chromatin remodeling complex (npBAF complex) and the neuron-specific chromatin remodeling complex (nBAF complex). During neural development a switch from a stem/progenitor to a postmitotic chromatin remodeling mechanism occurs as neurons exit the cell cycle and become committed to their adult state. The transition from proliferating neural stem/progenitor cells to postmitotic neurons requires a switch in subunit composition of the npBAF and nBAF complexes. As neural progenitors exit mitosis and differentiate into neurons, npBAF complexes which contain ACTL6A/BAF53A and PHF10/BAF45A, are exchanged for homologous alternative ACTL6B/BAF53B and DPF1/BAF45B or DPF3/BAF45C subunits in neuron-specific complexes (nBAF). The npBAF complex is essential for the self-renewal/proliferative capacity of the multipotent neural stem cells. The nBAF complex along with CREST plays a role regulating the activity of genes essential for dendrite growth. Has a strong influence on vitamin D-mediated transcriptional activity from an enhancer vitamin D receptor element (VDRE). May be a link between mammalian SWI-SNF-like chromatin remodeling complexes and the vitamin D receptor (VDR) heterodimer. Mediates critical interactions between nuclear receptors and the BRG1/SMARCA4 chromatin-remodeling complex for transactivation. Interacts with AKIRIN2. This Bos taurus (Bovine) protein is SWI/SNF-related matrix-associated actin-dependent regulator of chromatin subfamily D member 1 (SMARCD1).